We begin with the raw amino-acid sequence, 351 residues long: Fructose-1,6-bisphosphatase class 1 (351 aa).

Mg(2+) contacts are provided by glutamate 94, aspartate 113, leucine 115, and aspartate 116. Residues 116 to 119 (DGSS) and asparagine 207 contribute to the substrate site. Mg(2+) is bound at residue glutamate 279.

It belongs to the FBPase class 1 family. In terms of assembly, homotetramer. The cofactor is Mg(2+).

It localises to the cytoplasm. It carries out the reaction beta-D-fructose 1,6-bisphosphate + H2O = beta-D-fructose 6-phosphate + phosphate. It functions in the pathway carbohydrate biosynthesis; gluconeogenesis. The polypeptide is Fructose-1,6-bisphosphatase class 1 (Methylobacterium radiotolerans (strain ATCC 27329 / DSM 1819 / JCM 2831 / NBRC 15690 / NCIMB 10815 / 0-1)).